We begin with the raw amino-acid sequence, 149 residues long: Potassium binding protein Kbp (149 aa).

Residues 23–91 enclose the BON domain; it reads DKDDQAKKVQ…SVDDQVKTAT (69 aa). The LysM domain occupies 97 to 146; that stretch reads QFYTVKSGDTLSAISKQVYGNANLYNKIFEANKPMLKSPDKIYPGQVLRI.

The protein localises to the cytoplasm. Highly specific potassium binding protein that is required for normal growth in the presence of high levels of external K(+). May act as a sensor of cytoplasmic K(+) concentration. The polypeptide is Potassium binding protein Kbp (Escherichia coli O6:H1 (strain CFT073 / ATCC 700928 / UPEC)).